The following is a 2172-amino-acid chain: MATDSPSLLICGSVISDPDHAYLSRIRSSIIHNPHLAELQDAVIELPELWSLLVEREKSLQRVDAARVLRNLVEWIKCGNSSLPLEGRTSRNTQLAVLTVLAHFSEYMIYLNSHDMSEEDGRGNLDAHTSVLEGVRDGGIQGLCVGLLSAIALACSPTITDVAKYGTVAVRLALCVGALVDLDETELSEPTACIFARWPQSEDDDREELLKAVLENYPSSYVGVRLDVCSVNITAPKGVAMSLMRSLEETGAVAKQINLQGRYHHPGHEAMFQKLTDLCASLQMLQFPHHSHPLVPLRWNDSGEVVTDQTPLHEVALQCILVKRADWYTTITKSVTDMAQRTVASSADSKARVLALGPVDCIPRSILFITPLQVVRPMANAAFYHGYPDDSIAIIGVSCRFPGSETLPQFWEEIRAKRVNSCLEAAGSLDCAFFRKPPREAEHMDPQHRLGLHLAYEALQSGGYFSPSSSVTDNVGCYIGMSSCDYEENVNSHPPTAYSFTGTARAFSSGRISHFFGFTGPSMVIDTACSSSGVAIHTACKAIQSGECSMALAGGINLMVPEARSHQNLAAASFLSPTGQCRPFDARADGYRRSEGGGFVLLKRLSAAVADNDCILGVLAASAVNNSKGSRSITLPSIESQSHLYRRVLQAAGLHPHQVSYVEAHGTGTQKGDPIEWQSIQNVFGGRDRSGLPPLRLGSVKGNIGHCEAASGVAALVKVILMLQNRQIPPQANFSVLNPALPSLEEANMDIPVCLEPWEAPFRAAMVNNYGASGTNAAMLVCQPPLASPERLMSTGQPHQCPILIASHSESSIRQYCRTLMSFVETQRCVLGDSLLPSIAFHLGQRQNESCRHRVAFSATSADELKVRLHSQARNNHDESKASKPQGRPKPVVLVFAGQTGRQALLSREAYLSSSLLQHHLDRCDRILQTMGLHSLFPRIFETEPVDDLVDLHCMHFSLQYSVAASWIDTGLEIKAMVGHSLGQLTALCVSGVLSLRDALKMISGRASLIQNKWGSERGCMLSVEADAPTVETIAQSMPGAGKIEIACYNAALHQVIVGTEAAIAAFEEVARSRNVSVKRLLVSRGFHSEMMDCIVPEYQQLIQQLTLHPSVIPFEPCCKLGDNWDNITPELIARQSREPVYFSDAIRRVEKRLGPCIWLEAGSGSAGVTMARRALTNPGTPSFPSHSFHSILLQGQNPIKSLADTTINLWNEGIRVQFWLYHASERRRFMPLELPPSPFEKSEHWLPVLQKHKDSELANQNQDQKQEAPELVSLAGPTDGETVEFFINQHSNDYSTFVRGRTVFGQVLAPSSVYIEAVTRAFTLLPMYLSTPSSSPPSVEVKQVRMHAPFGLDLQKRLRLTLRKETMSSWRFVVESHPIDDGDNKARKIQASGTINWQGQGCAYLEPSRPLLRRLYDRCDELRDDRSASTVQGLFVKNILARVATYDNRYLGIQSITSKGLEAVADVAMPTIMSQACAGTVLSPPIFDNFLLIAELHASSLEDLAEDVYICNGFDAVIPHAHPGDMVSKCEGPWMVLSYLNRENDKTVSCDIFVTSADRDILLLEIIGASLKRIPIRSLQKALESINGIQQIQGSTARGTASTVVIDSDSDLPDSEANSPRVGSDLHADFPDLHPTYVPRISRVTSSDYPMDSSSFSSAQPPSSASSVLSDHDQESTALLSLLSEHLNCSQGIPPDTRLGEIGLDSLVAIQLKSDVEKAFGKRLSLDTIDENLTFSDLYRMVLNHDLPNDRGSTVLSDKAPKSKSDSSLHGQSYHVTPIRETTVSFQDSTLFTTQARLEFAQIKQETSSFAQMTGFAGFYTDVHQKQTSLVLAYILEAFSTLGCDLSALQAGDPLPPLRYTSKYQKLVSRFHKILEGAGLISVCEGQSVRFRTAEPLPQFGSSADTYRELLNECPKYRPDHQLLNVTGSRLSDCLSGRADPLQLLFRDAAAVKLLEDVYVSSPMFATGNKMLGEFLHRVLSRLGSTKRLRVLEVGAGTGATTRNAMDQLLASNVDFTYTFTDVSIALVTSAKKKFGALYNSQRRQSNMEFTVLDIEKSPPANMLESYDLIISSNCIHATRNLGQACANIEKLLRRDGGMLCLLELTRPLSWLDCVFGLLDGWWRFDDDRTYALADEHKWKSTLLDAGFIHVDWTDDGYRESEQFRLITAWR.

An N-terminal acylcarrier protein transacylase domain (SAT) region spans residues 74–181; it reads EWIKCGNSSL…LALCVGALVD (108 aa). A Ketosynthase family 3 (KS3) domain is found at 389 to 783; it reads DDSIAIIGVS…GTNAAMLVCQ (395 aa). Residues Cys-529, His-665, and His-706 each act as for beta-ketoacyl synthase activity in the active site. The tract at residues 895–1197 is malonyl-CoA:ACP transacylase (MAT) domain; sequence VFAGQTGRQA…SFHSILLQGQ (303 aa). The For acyl/malonyl transferase activity role is filled by Ser-981. An N-terminal hotdog fold region spans residues 1270-1403; that stretch reads PELVSLAGPT…GTINWQGQGC (134 aa). The PKS/mFAS DH domain occupies 1270–1581; sequence PELVSLAGPT…LKRIPIRSLQ (312 aa). The interval 1277 to 1575 is product template (PT) domain; sequence GPTDGETVEF…EIIGASLKRI (299 aa). A C-terminal hotdog fold region spans residues 1428-1581; sequence SASTVQGLFV…LKRIPIRSLQ (154 aa). Disordered stretches follow at residues 1608–1631 and 1650–1672; these read DSDS…HADF and YPMD…VLSD. Positions 1650-1668 are enriched in low complexity; that stretch reads YPMDSSSFSSAQPPSSASS. In terms of domain architecture, Carrier spans 1671 to 1747; the sequence is SDHDQESTAL…DLYRMVLNHD (77 aa). Ser-1707 carries the post-translational modification O-(pantetheine 4'-phosphoryl)serine. The disordered stretch occupies residues 1751–1773; that stretch reads DRGSTVLSDKAPKSKSDSSLHGQ. A methyltransferase (CMeT) domain region spans residues 1975–2155; that stretch reads EFLHRVLSRL…DAGFIHVDWT (181 aa).

It participates in secondary metabolite biosynthesis; terpenoid biosynthesis. In terms of biological role, non-reducing polyketide synthase; part of the gene cluster that mediates the biosynthesis of diterpenoid pyrones. The first step of the pathway is the synthesis of the alpha-pyrone moiety by the polyketide synthase dpfgA via condensation of one acetyl-CoA starter unit with 3 malonyl-CoA units and 2 methylations. The alpha-pyrone is then combined with geranylgeranyl pyrophosphate (GGPP) formed by the GGPP synthase dpfgD through the action of the prenyltransferase dpfgC to yield a linear alpha-pyrone diterpenoid. Subsequent steps in the diterpenoid pyrone biosynthetic pathway involve the decalin core formation, which is initiated by the epoxidation of the C10-C11 olefin by the FAD-dependent oxidoreductase dpfgE, and is followed by a cyclization cascade catalyzed by the terpene cyclase dpfgB. The short chain dehydrogenase/reductase dpfgG then oxidizes the 8S hydroxy group to a ketone and the short chain dehydrogenase/reductase dpfgH reduces the ketone to the 8R hydroxy group to yield higginsianin B. Higginsianin B is further methylated by the methyltransferase dpfgI to produce the intermediate named FDDP B. The cytochrome P450 monooxygenase dfgpJ then catalyzes a three-step oxidation at C-27 to generate a carboxylic acid as well as C-26 hydroxylation. Finally, methyltransferase dpfgK methylates the carboxylic acid generated by dpfgJ, yielding the final diterpenoid pyrones from the pathway which were named FDDP D and FDDP E. In Gibberella zeae (strain ATCC MYA-4620 / CBS 123657 / FGSC 9075 / NRRL 31084 / PH-1) (Wheat head blight fungus), this protein is Non-reducing polyketide synthase dpfgA.